We begin with the raw amino-acid sequence, 387 residues long: Protein disulfide isomerase pTAC5, chloroplastic (387 aa).

A chloroplast-targeting transit peptide spans 1–40 (MASSSLPLSLPFPLRSLTSTTRSLPFQCSPLFFSIPSSIV). Coiled-coil stretches lie at residues 72–106 (EQRWIRERESLLQEISDLQLRIQSLESRNSQLGNS) and 143–163 (REQIVEEVEEEEKRVIIAEEK). Residues 318–387 (PVDRSESTNT…CDVCDGKKNL (70 aa)) form a CR-type zinc finger.

In terms of assembly, interacts with HSP21; the formed complex associates with the plastid-encoded RNA polymerase (PEP) complex not only during transcription initiation, but also during elongation and termination, and with a stronger efficiency in illuminated chloroplasts. Binds to promoter regions of PEP-dependent genes, especially after a heat stress. Interacts with FLN2.

The protein resides in the plastid. The protein localises to the chloroplast stroma. It is found in the chloroplast nucleoid. It carries out the reaction Catalyzes the rearrangement of -S-S- bonds in proteins.. In terms of biological role, exhibits zinc-dependent disulfide isomerase activity. Required for seedling and chloroplast development under heat stress, probably by maintaining plastid-encoded RNA polymerase (PEP)-dependent transcription. This is Protein disulfide isomerase pTAC5, chloroplastic from Arabidopsis thaliana (Mouse-ear cress).